The following is a 181-amino-acid chain: Nedd8-conjugating enzyme UbcE2M (181 aa).

2 interaction with Uba3 regions span residues 4 to 7 (LFTL) and 24 to 54 (ASAA…PNDL). In terms of domain architecture, UBC core spans 26–170 (AAQLRIQKDI…VKKAMRGGCV (145 aa)). C108 serves as the catalytic Glycyl thioester intermediate.

This sequence belongs to the ubiquitin-conjugating enzyme family. UBC12 subfamily. As to quaternary structure, interacts with Uba3. As to expression, expressed in the wing disk.

The catalysed reaction is [E1 NEDD8-activating enzyme]-S-[NEDD8 protein]-yl-L-cysteine + [E2 NEDD8-conjugating enzyme]-L-cysteine = [E1 NEDD8-activating enzyme]-L-cysteine + [E2 NEDD8-conjugating enzyme]-S-[NEDD8-protein]-yl-L-cysteine.. It functions in the pathway protein modification; protein neddylation. Its function is as follows. Accepts the ubiquitin-like protein Nedd8 from the Uba3-APP-BP1 E1 complex and catalyzes its covalent attachment to other proteins. Required for Cul1 and Cul3 neddylation. Negatively regulates full-length ci stability and hedgehog signaling. The chain is Nedd8-conjugating enzyme UbcE2M from Drosophila melanogaster (Fruit fly).